We begin with the raw amino-acid sequence, 685 residues long: Putative protein FAR1-RELATED SEQUENCE 10 (685 aa).

One can recognise an FAR1 domain in the interval 69–161 (EYYSTFARKS…SNVHNHELLE (93 aa)). Positions 292–388 (VVVFDTSYRS…FMSHIVSKLA (97 aa)) constitute an MULE domain. The SWIM-type zinc finger occupies 565-603 (GECCVIWNPENEEIQCSCKEFEHSGILCRHTLRVLTVKN).

Belongs to the FHY3/FAR1 family.

This chain is Putative protein FAR1-RELATED SEQUENCE 10 (FRS10), found in Arabidopsis thaliana (Mouse-ear cress).